A 1250-amino-acid chain; its full sequence is DNA-directed RNA polymerase subunit beta'' (1250 aa).

Residues C224, C314, C321, and C324 each coordinate Zn(2+).

It belongs to the RNA polymerase beta' chain family. RpoC2 subfamily. In plastids the minimal PEP RNA polymerase catalytic core is composed of four subunits: alpha, beta, beta', and beta''. When a (nuclear-encoded) sigma factor is associated with the core the holoenzyme is formed, which can initiate transcription. The cofactor is Zn(2+).

It localises to the plastid. It is found in the chloroplast. The enzyme catalyses RNA(n) + a ribonucleoside 5'-triphosphate = RNA(n+1) + diphosphate. In terms of biological role, DNA-dependent RNA polymerase catalyzes the transcription of DNA into RNA using the four ribonucleoside triphosphates as substrates. The sequence is that of DNA-directed RNA polymerase subunit beta'' from Staurastrum punctulatum (Green alga).